The chain runs to 111 residues: ATP-dependent Clp protease adapter protein ClpS (111 aa).

It belongs to the ClpS family. Binds to the N-terminal domain of the chaperone ClpA.

Involved in the modulation of the specificity of the ClpAP-mediated ATP-dependent protein degradation. In Corynebacterium aurimucosum (strain ATCC 700975 / DSM 44827 / CIP 107346 / CN-1) (Corynebacterium nigricans), this protein is ATP-dependent Clp protease adapter protein ClpS.